Consider the following 328-residue polypeptide: Stress response kinase A (328 aa).

D201 functions as the Proton acceptor in the catalytic mechanism. 2 residues coordinate Mg(2+): N206 and D217. D217 is a catalytic residue.

It belongs to the SrkA/RdoA protein kinase family. In terms of assembly, monomer. Requires Mg(2+) as cofactor.

The protein localises to the cytoplasm. The catalysed reaction is L-seryl-[protein] + ATP = O-phospho-L-seryl-[protein] + ADP + H(+). The enzyme catalyses L-threonyl-[protein] + ATP = O-phospho-L-threonyl-[protein] + ADP + H(+). Functionally, a protein kinase that phosphorylates Ser and Thr residues. Probably acts to suppress the effects of stress linked to accumulation of reactive oxygen species. Probably involved in the extracytoplasmic stress response. The protein is Stress response kinase A of Escherichia coli O157:H7.